The following is a 178-amino-acid chain: Lipid A deacylase PagL (178 aa).

The first 19 residues, 1–19, serve as a signal peptide directing secretion; the sequence is MQFLKKNKPLFGIVTLALA. Active-site charge relay system residues include histidine 154, serine 156, and aspartate 168.

This sequence belongs to the PagL family. Homodimer.

It localises to the cell outer membrane. The catalysed reaction is a 3-(acyloxy)acyl derivative of bacterial toxin + H2O = a 3-hydroxyacyl derivative of bacterial toxin + a fatty acid + H(+). Has lipid A 3-O-deacylase activity. Hydrolyzes the ester bond at the 3 position of lipid A, a bioactive component of lipopolysaccharide (LPS), thereby releasing the primary fatty acyl moiety. This is Lipid A deacylase PagL from Bordetella bronchiseptica (strain ATCC BAA-588 / NCTC 13252 / RB50) (Alcaligenes bronchisepticus).